Here is a 254-residue protein sequence, read N- to C-terminus: Rho-related protein racD (254 aa).

15 to 22 (GDGAVGKT) provides a ligand contact to GTP. Residues 37–45 (YVPTVFDNF) carry the Effector region motif. Residues 62-66 (DTAGQ) and 120-123 (TKTD) each bind GTP. Residues 186 to 231 (AVTSPTSKSSGKSSPSSTSSKPSKTTTTTTTSSSSSSPPAASTAKP) are compositionally biased toward low complexity. The tract at residues 186 to 254 (AVTSPTSKSS…KDKDEKKPAK (69 aa)) is disordered. A compositionally biased stretch (basic and acidic residues) spans 232–254 (AGEKKLSWGLFRKKDKDEKKPAK).

The protein belongs to the small GTPase superfamily. Rho family.

The chain is Rho-related protein racD (racD) from Dictyostelium discoideum (Social amoeba).